A 155-amino-acid chain; its full sequence is Protein PtsT (155 aa).

The chain is Protein PtsT (ptsT) from Geobacillus stearothermophilus (Bacillus stearothermophilus).